The primary structure comprises 146 residues: Universal stress protein A homolog 2 (146 aa).

It belongs to the universal stress protein A family. In terms of assembly, homodimer.

Its subcellular location is the cytoplasm. In terms of biological role, involved in stress response. This is Universal stress protein A homolog 2 (uspA2) from Coxiella burnetii (strain RSA 493 / Nine Mile phase I).